A 311-amino-acid chain; its full sequence is MKHLISIADLNKSEILGLMDEADRFAEALEGREMKKLPTLRGRTIFTLFYENSTRTRSSFETAGKWMSADVINISASSSSVKKGESLRDTALTLKAVGADAIIMRHPSSGAARQVAGWLDDTAIINAGDGSNQHPTQALLDATTMRNRIGEISGKKVVIVGDILHSRVARSNAQLLTTLGAEVVFVAPPTLVPLGIEHWGAEPDSVRVSYDFDSEIADADVVMMLRVQAERMHGGFFPSHREYATRYGLSQARAERMKEGAIIMHPGPMLRGMEINYDVADAPQTVVLNQVTAGVHVRMAVLFTLLVGEEG.

Positions 55 and 56 each coordinate carbamoyl phosphate. Lysine 83 lines the L-aspartate pocket. Residues arginine 105, histidine 134, and glutamine 137 each contribute to the carbamoyl phosphate site. Residues arginine 167 and arginine 226 each contribute to the L-aspartate site. Carbamoyl phosphate contacts are provided by glycine 267 and proline 268.

The protein belongs to the aspartate/ornithine carbamoyltransferase superfamily. ATCase family. As to quaternary structure, heterododecamer (2C3:3R2) of six catalytic PyrB chains organized as two trimers (C3), and six regulatory PyrI chains organized as three dimers (R2).

It carries out the reaction carbamoyl phosphate + L-aspartate = N-carbamoyl-L-aspartate + phosphate + H(+). It functions in the pathway pyrimidine metabolism; UMP biosynthesis via de novo pathway; (S)-dihydroorotate from bicarbonate: step 2/3. Catalyzes the condensation of carbamoyl phosphate and aspartate to form carbamoyl aspartate and inorganic phosphate, the committed step in the de novo pyrimidine nucleotide biosynthesis pathway. The protein is Aspartate carbamoyltransferase catalytic subunit of Corynebacterium jeikeium (strain K411).